The following is a 301-amino-acid chain: Probable 2-(5''-triphosphoribosyl)-3'-dephosphocoenzyme-A synthase (301 aa).

This sequence belongs to the CitG/MdcB family.

It catalyses the reaction 3'-dephospho-CoA + ATP = 2'-(5''-triphospho-alpha-D-ribosyl)-3'-dephospho-CoA + adenine. The protein is Probable 2-(5''-triphosphoribosyl)-3'-dephosphocoenzyme-A synthase of Pectobacterium carotovorum subsp. carotovorum (strain PC1).